Reading from the N-terminus, the 350-residue chain is Hydroxymethylglutaryl-CoA synthase (350 aa).

The Proton donor/acceptor role is filled by glutamate 83. Cysteine 115 functions as the Acyl-thioester intermediate in the catalytic mechanism. (3S)-3-hydroxy-3-methylglutaryl-CoA is bound by residues cysteine 115 and threonine 156. Arginine 204 provides a ligand contact to CoA. 2 residues coordinate (3S)-3-hydroxy-3-methylglutaryl-CoA: threonine 206 and histidine 239. Histidine 239 functions as the Proton donor/acceptor in the catalytic mechanism. Lysine 244 lines the CoA pocket. Positions 271 and 301 each coordinate (3S)-3-hydroxy-3-methylglutaryl-CoA.

The protein belongs to the thiolase-like superfamily. Archaeal HMG-CoA synthase family. In terms of assembly, interacts with acetoacetyl-CoA thiolase that catalyzes the precedent step in the pathway and with a DUF35 protein. The acetoacetyl-CoA thiolase/HMG-CoA synthase complex channels the intermediate via a fused CoA-binding site, which allows for efficient coupling of the endergonic thiolase reaction with the exergonic HMGCS reaction.

It catalyses the reaction acetoacetyl-CoA + acetyl-CoA + H2O = (3S)-3-hydroxy-3-methylglutaryl-CoA + CoA + H(+). Its pathway is metabolic intermediate biosynthesis; (R)-mevalonate biosynthesis; (R)-mevalonate from acetyl-CoA: step 2/3. Catalyzes the condensation of acetyl-CoA with acetoacetyl-CoA to form 3-hydroxy-3-methylglutaryl-CoA (HMG-CoA). Functions in the mevalonate (MVA) pathway leading to isopentenyl diphosphate (IPP), a key precursor for the biosynthesis of isoprenoid compounds that are building blocks of archaeal membrane lipids. This Thermococcus sibiricus (strain DSM 12597 / MM 739) protein is Hydroxymethylglutaryl-CoA synthase.